We begin with the raw amino-acid sequence, 315 residues long: Thymidylate synthase (315 aa).

DUMP-binding positions include arginine 22 and 177–178 (RR). Cysteine 197 functions as the Nucleophile in the catalytic mechanism. Residues 217-220 (RSAD), asparagine 228, and 258-260 (HLY) contribute to the dUMP site. A (6R)-5,10-methylene-5,6,7,8-tetrahydrofolate-binding site is contributed by aspartate 220. Residue alanine 314 coordinates (6R)-5,10-methylene-5,6,7,8-tetrahydrofolate.

This sequence belongs to the thymidylate synthase family. Bacterial-type ThyA subfamily. As to quaternary structure, homodimer.

Its subcellular location is the cytoplasm. It catalyses the reaction dUMP + (6R)-5,10-methylene-5,6,7,8-tetrahydrofolate = 7,8-dihydrofolate + dTMP. It participates in pyrimidine metabolism; dTTP biosynthesis. Its function is as follows. Catalyzes the reductive methylation of 2'-deoxyuridine-5'-monophosphate (dUMP) to 2'-deoxythymidine-5'-monophosphate (dTMP) while utilizing 5,10-methylenetetrahydrofolate (mTHF) as the methyl donor and reductant in the reaction, yielding dihydrofolate (DHF) as a by-product. This enzymatic reaction provides an intracellular de novo source of dTMP, an essential precursor for DNA biosynthesis. The chain is Thymidylate synthase from Enterococcus faecalis (strain ATCC 700802 / V583).